The sequence spans 362 residues: Transcription factor Sox-7 (362 aa).

The segment at 21-41 (EDLSDGLSPHRSPREKGSETR) is disordered. The span at 32–41 (SPREKGSETR) shows a compositional bias: basic and acidic residues. Residues 42–110 (IRRPMNAFMV…QHMQDYPNYK (69 aa)) constitute a DNA-binding region (HMG box). In terms of domain architecture, Sox C-terminal spans 245–362 (QTGSSMIPPV…ATYYNSYSVS (118 aa)).

Expressed in the embryonic pronephric sinus as well as posterior cardinal veins.

The protein resides in the nucleus. Functionally, transcription factor. Binds to the DNA sequence 5'-AACAAT-3'. Acts downstream of vegt and upstream of nodal signaling to promote endodermal and mesodermal differentiation by promoting vegt-induced expression of both endodermal genes (including endodermin) and mesodermal genes (including snai1/snail and snai2/slug). Induces expression of multiple nodal genes (including nodal, nodal2, nodal4, nodal5 and nodal6) and binds directly to sites within the promoter of the nodal5 gene. The endodermal and mesodermal specification pathways then interact to initiate cardiogenesis. Acts partially redundantly with sox18 during cardiogenesis. Also acts as an antagonist of beta-catenin signaling. Regulates (possibly indirectly) development of the pronephros, the functional larval kidney. This Xenopus tropicalis (Western clawed frog) protein is Transcription factor Sox-7.